A 435-amino-acid polypeptide reads, in one-letter code: Nucleoredoxin (435 aa).

Serine 2 bears the N-acetylserine mark. Residues 167-321 (PKPFREVIAG…VLELSDSNAA (155 aa)) form the Thioredoxin domain.

This sequence belongs to the nucleoredoxin family. In terms of assembly, associates with the phosphatase 2A holoenzyme. Interacts with PPP2CA; the interaction is direct. Interacts with DVL1 (via PDZ domain); the interaction is direct and regulated by oxidative stress.

The protein localises to the cytoplasm. The protein resides in the cytosol. It localises to the nucleus. The enzyme catalyses [protein]-dithiol + NAD(+) = [protein]-disulfide + NADH + H(+). It catalyses the reaction [protein]-dithiol + NADP(+) = [protein]-disulfide + NADPH + H(+). Its function is as follows. Functions as a redox-dependent negative regulator of the Wnt signaling pathway, possibly by preventing ubiquitination of DVL3 by the BCR(KLHL12) complex. May also function as a transcriptional regulator act as a regulator of protein phosphatase 2A (PP2A). This Homo sapiens (Human) protein is Nucleoredoxin (NXN).